Reading from the N-terminus, the 373-residue chain is Plasmepsin VIII (373 aa).

Residues 1-21 (MNKFFVFPLLLILNSIVLVKS) form the signal peptide. The region spanning 50 to 370 (FIGEISIGNP…EKDNMRIGLA (321 aa)) is the Peptidase A1 domain. Catalysis depends on residues Asp-68 and Asp-258.

It belongs to the peptidase A1 family.

Its function is as follows. During the development in the mosquito vector, plays an essential role in sporozoite egress from the oocyst and sporozoite gliding motility, which is required for the invasion of salivary glands and subsequent transmission to the host. This chain is Plasmepsin VIII, found in Plasmodium berghei (strain Anka).